A 656-amino-acid polypeptide reads, in one-letter code: UvrABC system protein C (656 aa).

A GIY-YIG domain is found at 41-120 (KSSGCYLFKD…IKTNKPYFNI (80 aa)). The 36-residue stretch at 230 to 265 (DDLEVFLERKMNQYSNDLEFENAAKIRDQISGLKLL) folds into the UVR domain.

It belongs to the UvrC family. As to quaternary structure, interacts with UvrB in an incision complex.

It localises to the cytoplasm. The UvrABC repair system catalyzes the recognition and processing of DNA lesions. UvrC both incises the 5' and 3' sides of the lesion. The N-terminal half is responsible for the 3' incision and the C-terminal half is responsible for the 5' incision. In Prochlorococcus marinus subsp. pastoris (strain CCMP1986 / NIES-2087 / MED4), this protein is UvrABC system protein C.